Consider the following 92-residue polypeptide: Large ribosomal subunit protein bL27 (92 aa).

The disordered stretch occupies residues 1-20; sequence MAHKKAGGSTRNGRDSNPKY.

This sequence belongs to the bacterial ribosomal protein bL27 family.

In Legionella pneumophila (strain Paris), this protein is Large ribosomal subunit protein bL27.